A 446-amino-acid chain; its full sequence is Histidine--tRNA ligase (446 aa).

Belongs to the class-II aminoacyl-tRNA synthetase family. As to quaternary structure, homodimer.

It localises to the cytoplasm. It catalyses the reaction tRNA(His) + L-histidine + ATP = L-histidyl-tRNA(His) + AMP + diphosphate + H(+). This is Histidine--tRNA ligase from Burkholderia vietnamiensis (strain G4 / LMG 22486) (Burkholderia cepacia (strain R1808)).